The chain runs to 201 residues: 3-isopropylmalate dehydratase small subunit (201 aa).

The protein belongs to the LeuD family. LeuD type 1 subfamily. Heterodimer of LeuC and LeuD.

It catalyses the reaction (2R,3S)-3-isopropylmalate = (2S)-2-isopropylmalate. It functions in the pathway amino-acid biosynthesis; L-leucine biosynthesis; L-leucine from 3-methyl-2-oxobutanoate: step 2/4. Functionally, catalyzes the isomerization between 2-isopropylmalate and 3-isopropylmalate, via the formation of 2-isopropylmaleate. The sequence is that of 3-isopropylmalate dehydratase small subunit from Shewanella sp. (strain MR-4).